The chain runs to 442 residues: MAKKLYIETHGCQMNEYDSSRMVDLLGEHQALEVTARAEDADVILLNTCSIRERAQDRVYSQLGRWRELKLANPEMVIAVGGCVASQEGAAIRDRAPYVDVVFGPQTLHRLPEMIDAARVTRLPQVDVSFPEIEKFDHLPEPRVDGPSAYVSVMEGCSKYCTFCVVPYTRGEEVSRPFDDVLSEVIHLAENGVREVTLLGQNVNGYRGTTHDGRVADLADLIRVVAAVDGIDRIRYTTSHPLEFSDSLIQAHAEVPELVKHLHLPVQSGSDRILAAMKRNHTTLEYKSRLRKLRAAVPGISISSDFIVGFPGETEKDFDNTMKLIEDVGFDFSFSFVYSPRPGTPAADLKDDTPEALKKERLAALQHRLNQQGFEISRQMVGSIQRILVTDYSKKDPGELQGRTENNRIVNFRCDNPKLIGQFADVHIDDAQPHSLRGSLLQ.

Positions 3–120 constitute an MTTase N-terminal domain; sequence KKLYIETHGC…LPEMIDAARV (118 aa). The [4Fe-4S] cluster site is built by cysteine 12, cysteine 49, cysteine 83, cysteine 157, cysteine 161, and cysteine 164. The region spanning 143-375 is the Radical SAM core domain; the sequence is RVDGPSAYVS…QHRLNQQGFE (233 aa). Positions 378-442 constitute a TRAM domain; sequence RQMVGSIQRI…PHSLRGSLLQ (65 aa).

The protein belongs to the methylthiotransferase family. MiaB subfamily. As to quaternary structure, monomer. [4Fe-4S] cluster is required as a cofactor.

It is found in the cytoplasm. It catalyses the reaction N(6)-dimethylallyladenosine(37) in tRNA + (sulfur carrier)-SH + AH2 + 2 S-adenosyl-L-methionine = 2-methylsulfanyl-N(6)-dimethylallyladenosine(37) in tRNA + (sulfur carrier)-H + 5'-deoxyadenosine + L-methionine + A + S-adenosyl-L-homocysteine + 2 H(+). In terms of biological role, catalyzes the methylthiolation of N6-(dimethylallyl)adenosine (i(6)A), leading to the formation of 2-methylthio-N6-(dimethylallyl)adenosine (ms(2)i(6)A) at position 37 in tRNAs that read codons beginning with uridine. The polypeptide is tRNA-2-methylthio-N(6)-dimethylallyladenosine synthase (Pseudomonas syringae pv. syringae (strain B728a)).